The following is a 139-amino-acid chain: MPVMPIPRRVRSFHGPHTTCLHAACGPVRASHLARTKYNNFDVYIKTRWLYGFIRFLLYFSCSLFTAALWGALAALFCLQYLGVRVLLRFQRKLSVLLLLLGRRRVDFRLVNELLVYGIHVTMLLVGGLGWCFMVFVDM.

A run of 2 helical transmembrane segments spans residues 56 to 76 (FLLY…LAAL) and 116 to 136 (VYGI…FMVF).

In terms of assembly, (Microbial infection) Interacts with herpes simplex virus 1/HHV-1 protein CVC2/UL25.

Its subcellular location is the membrane. The protein localises to the nucleus. It is found in the cytoplasm. May play a role in cell proliferation by promoting progression into S phase. Its function is as follows. (Microbial infection) Promotes human herpes simplex virus 1/HHV-1 proliferation. This chain is Transmembrane protein 250, found in Homo sapiens (Human).